The following is a 370-amino-acid chain: Cytochrome b (370 aa).

The next 4 helical transmembrane spans lie at 25-45 (FGSM…FLAV), 69-90 (WMMQ…YIHI), 105-125 (WLSG…GYVL), and 170-190 (FFAL…LHIL). 2 residues coordinate heme b: His75 and His89. Heme b-binding residues include His174 and His188. His193 is a binding site for a ubiquinone. 4 consecutive transmembrane segments (helical) span residues 218-238 (YKDM…VSFF), 280-300 (LGGA…PFTH), 312-332 (LMQL…WTAT), and 339-358 (FTTI…ISNP).

This sequence belongs to the cytochrome b family. In terms of assembly, the cytochrome bc1 complex contains 3 respiratory subunits (MT-CYB, CYC1 and UQCRFS1), 2 core proteins (UQCRC1 and UQCRC2) and probably 6 low-molecular weight proteins. The cofactor is heme b.

Its subcellular location is the mitochondrion inner membrane. Its function is as follows. Component of the ubiquinol-cytochrome c reductase complex (complex III or cytochrome b-c1 complex) that is part of the mitochondrial respiratory chain. The b-c1 complex mediates electron transfer from ubiquinol to cytochrome c. Contributes to the generation of a proton gradient across the mitochondrial membrane that is then used for ATP synthesis. In Chilabothrus strigilatus strigilatus (New Providence boa constrictor), this protein is Cytochrome b (MT-CYB).